Here is a 117-residue protein sequence, read N- to C-terminus: Large ribosomal subunit protein uL23 (117 aa).

This sequence belongs to the universal ribosomal protein uL23 family. In terms of assembly, part of the 50S ribosomal subunit. Contacts protein L29, and trigger factor when it is bound to the ribosome.

Functionally, one of the early assembly proteins it binds 23S rRNA. One of the proteins that surrounds the polypeptide exit tunnel on the outside of the ribosome. Forms the main docking site for trigger factor binding to the ribosome. The polypeptide is Large ribosomal subunit protein uL23 (Acetivibrio thermocellus (strain ATCC 27405 / DSM 1237 / JCM 9322 / NBRC 103400 / NCIMB 10682 / NRRL B-4536 / VPI 7372) (Clostridium thermocellum)).